A 254-amino-acid polypeptide reads, in one-letter code: Sec-independent protein translocase protein TatCy (254 aa).

6 helical membrane-spanning segments follow: residues 24-44 (IVAL…KPII), 67-87 (LYVF…PVIL), 112-132 (VSIL…FPFV), 157-177 (FLLQ…ILMF), 187-207 (MFLA…AALI), and 212-232 (LLSH…SILI).

It belongs to the TatC family. Forms a complex with TatAy. Two types of complexes exist: one composed of TatAy and TatCy, and another composed only of TatAy.

The protein localises to the cell membrane. In terms of biological role, part of the twin-arginine translocation (Tat) system that transports large folded proteins containing a characteristic twin-arginine motif in their signal peptide across membranes. Required for YwbN secretion. In Bacillus subtilis (strain 168), this protein is Sec-independent protein translocase protein TatCy.